Here is a 149-residue protein sequence, read N- to C-terminus: D-aminoacyl-tRNA deacylase (149 aa).

The short motif at glycine 137 to proline 138 is the Gly-cisPro motif, important for rejection of L-amino acids element.

The protein belongs to the DTD family. In terms of assembly, homodimer.

The protein localises to the cytoplasm. The enzyme catalyses glycyl-tRNA(Ala) + H2O = tRNA(Ala) + glycine + H(+). It carries out the reaction a D-aminoacyl-tRNA + H2O = a tRNA + a D-alpha-amino acid + H(+). Functionally, an aminoacyl-tRNA editing enzyme that deacylates mischarged D-aminoacyl-tRNAs. Also deacylates mischarged glycyl-tRNA(Ala), protecting cells against glycine mischarging by AlaRS. Acts via tRNA-based rather than protein-based catalysis; rejects L-amino acids rather than detecting D-amino acids in the active site. By recycling D-aminoacyl-tRNA to D-amino acids and free tRNA molecules, this enzyme counteracts the toxicity associated with the formation of D-aminoacyl-tRNA entities in vivo and helps enforce protein L-homochirality. In Fervidobacterium nodosum (strain ATCC 35602 / DSM 5306 / Rt17-B1), this protein is D-aminoacyl-tRNA deacylase.